We begin with the raw amino-acid sequence, 230 residues long: LexA repressor (230 aa).

Positions 1 to 21 are disordered; it reads MSDDSSETRTGGRRGADAGLT. The H-T-H motif DNA-binding region spans 44–64; that stretch reads IREIGDAVGLTSTSSVAHQLR. Residues S154 and K191 each act as for autocatalytic cleavage activity in the active site.

It belongs to the peptidase S24 family. In terms of assembly, homodimer.

The catalysed reaction is Hydrolysis of Ala-|-Gly bond in repressor LexA.. In terms of biological role, represses a number of genes involved in the response to DNA damage (SOS response), including recA and lexA. In the presence of single-stranded DNA, RecA interacts with LexA causing an autocatalytic cleavage which disrupts the DNA-binding part of LexA, leading to derepression of the SOS regulon and eventually DNA repair. This is LexA repressor from Mycobacterium sp. (strain JLS).